Reading from the N-terminus, the 576-residue chain is Potassium-transporting ATPase potassium-binding subunit (576 aa).

12 helical membrane-spanning segments follow: residues 4 to 24 (QAWI…WPLG), 65 to 85 (AYAL…YALQ), 136 to 156 (ALGV…FALI), 179 to 199 (VYVL…QGVI), 257 to 277 (LSNF…VFAF), 288 to 308 (GALL…VTSL), 341 to 361 (FGIA…CGAV), 371 to 391 (LGGA…GGVG), 393 to 413 (GLYG…LMIG), 430 to 450 (MTAV…AVAL), 497 to 517 (LLLA…VLAI), and 540 to 560 (LFVV…YVPA).

This sequence belongs to the KdpA family. The system is composed of three essential subunits: KdpA, KdpB and KdpC.

The protein resides in the cell inner membrane. In terms of biological role, part of the high-affinity ATP-driven potassium transport (or Kdp) system, which catalyzes the hydrolysis of ATP coupled with the electrogenic transport of potassium into the cytoplasm. This subunit binds the periplasmic potassium ions and delivers the ions to the membrane domain of KdpB through an intramembrane tunnel. This is Potassium-transporting ATPase potassium-binding subunit from Methylibium petroleiphilum (strain ATCC BAA-1232 / LMG 22953 / PM1).